A 97-amino-acid chain; its full sequence is Small ribosomal subunit protein bS20 (97 aa).

The segment at 1–22 is disordered; the sequence is MANSKSALKRIRTSERNRLRNK.

The protein belongs to the bacterial ribosomal protein bS20 family.

Binds directly to 16S ribosomal RNA. The chain is Small ribosomal subunit protein bS20 from Crocosphaera subtropica (strain ATCC 51142 / BH68) (Cyanothece sp. (strain ATCC 51142)).